A 158-amino-acid polypeptide reads, in one-letter code: Transcription elongation factor GreA (158 aa).

The stretch at 47–68 (AEYDAAKEAQGLLEMRIAKLEE) forms a coiled coil.

Belongs to the GreA/GreB family.

Its function is as follows. Necessary for efficient RNA polymerase transcription elongation past template-encoded arresting sites. The arresting sites in DNA have the property of trapping a certain fraction of elongating RNA polymerases that pass through, resulting in locked ternary complexes. Cleavage of the nascent transcript by cleavage factors such as GreA or GreB allows the resumption of elongation from the new 3'terminus. GreA releases sequences of 2 to 3 nucleotides. The sequence is that of Transcription elongation factor GreA from Flavobacterium johnsoniae (strain ATCC 17061 / DSM 2064 / JCM 8514 / BCRC 14874 / CCUG 350202 / NBRC 14942 / NCIMB 11054 / UW101) (Cytophaga johnsonae).